Here is a 522-residue protein sequence, read N- to C-terminus: Coiled-coil domain-containing protein 149-B (522 aa).

2 coiled-coil regions span residues 1–196 (MANQ…LESK) and 260–287 (IRHQ…LEVS). The segment at 413 to 522 (ACTAERSEQH…TSPHQECPSS (110 aa)) is disordered. Composition is skewed to polar residues over residues 429–438 (GGHQSMSTEA), 467–490 (QPVT…TAEQ), and 503–522 (ASLN…CPSS).

The protein belongs to the CCDC149 family.

This Danio rerio (Zebrafish) protein is Coiled-coil domain-containing protein 149-B (ccdc149b).